Consider the following 245-residue polypeptide: TLC domain-containing protein 5 (245 aa).

Helical transmembrane passes span 1-21, 38-58, 75-95, 99-119, 162-182, and 191-211; these read MALA…SLYI, LVTF…GFID, VHVL…CVYF, GALM…ALVL, FLFV…LLFC, and WFVK…MFSI. The 176-residue stretch at 29–204 folds into the TLC domain; that stretch reads HRSYEWSCRL…AGGVAMYAVS (176 aa).

Belongs to the TLCD5 family.

It localises to the membrane. The sequence is that of TLC domain-containing protein 5 from Homo sapiens (Human).